We begin with the raw amino-acid sequence, 345 residues long: NADH-ubiquinone oxidoreductase chain 2 (345 aa).

10 helical membrane-spanning segments follow: residues 1–21 (MNPL…ILTT), 26–46 (WVSA…IISM), 60–80 (FLIQ…NAHL), 96–115 (IALT…HFWL), 122–144 (VPIL…LLIM), 148–170 (LIPT…LGGL), 201–223 (TLLN…HLTM), 242–262 (SLFL…GFIP), 274–294 (NLTP…MFYL), and 323–343 (TSTL…TPTL).

This sequence belongs to the complex I subunit 2 family.

Its subcellular location is the mitochondrion inner membrane. It catalyses the reaction a ubiquinone + NADH + 5 H(+)(in) = a ubiquinol + NAD(+) + 4 H(+)(out). In terms of biological role, core subunit of the mitochondrial membrane respiratory chain NADH dehydrogenase (Complex I) that is believed to belong to the minimal assembly required for catalysis. Complex I functions in the transfer of electrons from NADH to the respiratory chain. The immediate electron acceptor for the enzyme is believed to be ubiquinone. The chain is NADH-ubiquinone oxidoreductase chain 2 (MT-ND2) from Varanus nebulosus (Clouded monitor).